The chain runs to 286 residues: Shikimate dehydrogenase (NADP(+)) (286 aa).

Shikimate contacts are provided by residues 21 to 23 (TLS) and threonine 68. Residue lysine 72 is the Proton acceptor of the active site. An NADP(+)-binding site is contributed by glutamate 84. Shikimate contacts are provided by asparagine 93 and aspartate 108. NADP(+) is bound by residues 132 to 136 (GNGGA) and leucine 230. Residue tyrosine 232 participates in shikimate binding. Glycine 253 provides a ligand contact to NADP(+).

This sequence belongs to the shikimate dehydrogenase family. As to quaternary structure, homodimer.

It catalyses the reaction shikimate + NADP(+) = 3-dehydroshikimate + NADPH + H(+). The protein operates within metabolic intermediate biosynthesis; chorismate biosynthesis; chorismate from D-erythrose 4-phosphate and phosphoenolpyruvate: step 4/7. Involved in the biosynthesis of the chorismate, which leads to the biosynthesis of aromatic amino acids. Catalyzes the reversible NADPH linked reduction of 3-dehydroshikimate (DHSA) to yield shikimate (SA). The protein is Shikimate dehydrogenase (NADP(+)) of Microcystis aeruginosa (strain NIES-843 / IAM M-2473).